Here is a 165-residue protein sequence, read N- to C-terminus: Neurotrophin-3 (165 aa).

A signal peptide spans 1–3; the sequence is IQS. Residues 4-119 constitute a propeptide that is removed on maturation; that stretch reads TSMDQGSLSE…VLNRTSRRKR (116 aa). N-linked (GlcNAc...) asparagine glycosylation occurs at N112.

Belongs to the NGF-beta family.

The protein resides in the secreted. In terms of biological role, seems to promote the survival of visceral and proprioceptive sensory neurons. The protein is Neurotrophin-3 (NTF3) of Anilius scytale (Coral cylinder snake).